The sequence spans 345 residues: MAEFWASPYGFALSMLLQGLAVIAFVMGSLIFMVYGDRKIWAAVQMRRGPNVVGPWGLLQTFADALKYIVKEIVIPAGADKFVYFLAPFLSMMLALFAFVVIPFDEGWVMANINVGILFIFAASSLEVYGVIMGGWASNSKYPFLASLRSAAQMISYEVSLGLIIIGIIISTGSMNLTAIVEAQRGDYGLLNWYWLPHLPMVVLFFVSALAECNRPPFDLVEAESELVAGFMTEYSSTPYLLFMAGEYIAMYLMCALLSLLFFGGWLSPVPFIADGWWWMVIKMWFWFYMFAMVKAIVPRYRYDQLMRIGWKVFLPLSLGWVVLVAILARYEILGGFWARFAVGG.

8 helical membrane passes run 15–35 (MLLQ…FMVY), 82–102 (FVYF…FVVI), 115–135 (VGIL…IMGG), 161–181 (LGLI…TAIV), 190–210 (LLNW…VSAL), 240–262 (YLLF…SLLF), 278–298 (WWMV…KAIV), and 309–329 (IGWK…AILA).

Belongs to the complex I subunit 1 family. In terms of assembly, NDH-1 is composed of at least 14 different subunits, Nqo1 to Nqo14. The complex has a L-shaped structure, with the hydrophobic arm (subunits Nqo7, Nqo8, Nqo10 to Nqo14) embedded in the inner membrane and the hydrophilic peripheral arm (subunits Nqo1 to Nqo6, Nqo9) protruding into the bacterial cytoplasm. The hydrophilic domain contains all the redox centers. NADH-quinone oxidoreductase forms a supercomplex with ubiquinol-cytochrome c reductase complex (complex III or cytochrome b-c1 complex) and cytochrome c oxidase (complex IV), which stabilizes the NADH-quinone oxidoreductase complex.

The protein localises to the cell inner membrane. The catalysed reaction is a quinone + NADH + 5 H(+)(in) = a quinol + NAD(+) + 4 H(+)(out). In terms of biological role, NDH-1 shuttles electrons from NADH, via FMN and iron-sulfur (Fe-S) centers, to quinones in the respiratory chain. The immediate electron acceptor for the enzyme in this species is believed to be ubiquinone. Couples the redox reaction to proton translocation (for every two electrons transferred, four hydrogen ions are translocated across the cytoplasmic membrane), and thus conserves the redox energy in a proton gradient. This subunit may bind ubiquinone. The protein is NADH-quinone oxidoreductase subunit H of Paracoccus denitrificans (strain Pd 1222).